We begin with the raw amino-acid sequence, 116 residues long: Large ribosomal subunit protein bL17 (116 aa).

It belongs to the bacterial ribosomal protein bL17 family. Part of the 50S ribosomal subunit. Contacts protein L32.

The polypeptide is Large ribosomal subunit protein bL17 (Prochlorococcus marinus (strain MIT 9312)).